The chain runs to 360 residues: UDP-N-acetylglucosamine--N-acetylmuramyl-(pentapeptide) pyrophosphoryl-undecaprenol N-acetylglucosamine transferase (360 aa).

The UDP-N-acetyl-alpha-D-glucosamine site is built by S198 and Q289.

Belongs to the glycosyltransferase 28 family. MurG subfamily.

It localises to the cell membrane. It catalyses the reaction Mur2Ac(oyl-L-Ala-gamma-D-Glu-L-Lys-D-Ala-D-Ala)-di-trans,octa-cis-undecaprenyl diphosphate + UDP-N-acetyl-alpha-D-glucosamine = beta-D-GlcNAc-(1-&gt;4)-Mur2Ac(oyl-L-Ala-gamma-D-Glu-L-Lys-D-Ala-D-Ala)-di-trans,octa-cis-undecaprenyl diphosphate + UDP + H(+). Its pathway is cell wall biogenesis; peptidoglycan biosynthesis. In terms of biological role, cell wall formation. Catalyzes the transfer of a GlcNAc subunit on undecaprenyl-pyrophosphoryl-MurNAc-pentapeptide (lipid intermediate I) to form undecaprenyl-pyrophosphoryl-MurNAc-(pentapeptide)GlcNAc (lipid intermediate II). The protein is UDP-N-acetylglucosamine--N-acetylmuramyl-(pentapeptide) pyrophosphoryl-undecaprenol N-acetylglucosamine transferase of Streptococcus pyogenes serotype M49 (strain NZ131).